The chain runs to 526 residues: Peptide chain release factor 3 (526 aa).

The tr-type G domain maps to 8 to 277; that stretch reads NKRRTFAIIS…GLTEWAPKPQ (270 aa). Residues 17–24, 85–89, and 139–142 contribute to the GTP site; these read SHPDAGKT, DTPGH, and NKLD.

It belongs to the TRAFAC class translation factor GTPase superfamily. Classic translation factor GTPase family. PrfC subfamily.

The protein resides in the cytoplasm. Functionally, increases the formation of ribosomal termination complexes and stimulates activities of RF-1 and RF-2. It binds guanine nucleotides and has strong preference for UGA stop codons. It may interact directly with the ribosome. The stimulation of RF-1 and RF-2 is significantly reduced by GTP and GDP, but not by GMP. The sequence is that of Peptide chain release factor 3 from Actinobacillus pleuropneumoniae serotype 3 (strain JL03).